Reading from the N-terminus, the 482-residue chain is MPPSPLDDRVVVALSRPVRPQDLNLCLDSSYLGSANPGSNSHPPVIATTVVSLKAANLTYMPSSSGSARSLNCGCSSASCCTVATYDKDNQAQTQAIAAGTTTTAIGTSTTCPANQMVNNNENTGSLSPSSGVGSPVSGTPKQLASIKIIYPNDLAKKMTKCSKSHLPSQGPVIIDCRPFMEYNKSHIQGAVHINCADKISRRRLQQGKITVLDLISCREGKDSFKRIFSKEIIVYDENTNEPSRVMPSQPLHIVLESLKREGKEPLVLKGGLSSFKQNHENLCDNSLQLQECREVGGGASAASSLLPQPIPTTPDIENAELTPILPFLFLGNEQDAQDLDTMQRLNIGYVINVTTHLPLYHYEKGLFNYKRLPATDSNKQNLRQYFEEAFEFIEEAHQCGKGLLIHCQAGVSRSATIVIAYLMKHTRMTMTDAYKFVKGKRPIISPNLNFMGQLLEFEEDLNNGVTPRILTPKLMGVETVV.

The Rhodanese domain occupies Pro168–Asp285. The segment at Lys199–Leu215 is interaction with MAP kinases. The region spanning Glu321–Asn464 is the Tyrosine-protein phosphatase domain. The Phosphocysteine intermediate role is filled by Cys408.

The protein belongs to the protein-tyrosine phosphatase family. Non-receptor class dual specificity subfamily. Monomer. Interacts with MAPK14. Expressed in keratinocytes (at protein level). Detected in brain.

Its subcellular location is the cytoplasm. It localises to the nucleus. It carries out the reaction O-phospho-L-tyrosyl-[protein] + H2O = L-tyrosyl-[protein] + phosphate. The catalysed reaction is O-phospho-L-seryl-[protein] + H2O = L-seryl-[protein] + phosphate. The enzyme catalyses O-phospho-L-threonyl-[protein] + H2O = L-threonyl-[protein] + phosphate. In terms of biological role, protein phosphatase involved in the inactivation of MAP kinases. Has a specificity for the MAPK11/MAPK12/MAPK13/MAPK14 subfamily. It preferably dephosphorylates p38. The chain is Dual specificity protein phosphatase 10 (DUSP10) from Homo sapiens (Human).